We begin with the raw amino-acid sequence, 90 residues long: DNA-binding protein HU-1 (90 aa).

Phosphothreonine is present on Thr4. The segment at 55-90 is disordered; it reads RSARKGRNPQTGEEIEIPATKNPAFKPGKQLKDAVN.

This sequence belongs to the bacterial histone-like protein family. As to quaternary structure, homodimer.

Histone-like DNA-binding protein which is capable of wrapping DNA to stabilize it, and thus to prevent its denaturation under extreme environmental conditions. This Halalkalibacterium halodurans (strain ATCC BAA-125 / DSM 18197 / FERM 7344 / JCM 9153 / C-125) (Bacillus halodurans) protein is DNA-binding protein HU-1 (hup1).